We begin with the raw amino-acid sequence, 723 residues long: Cyclin-T2 (723 aa).

Positions 1 to 298 (MASGRGASSR…SVTGVPANPS (298 aa)) are interaction with MDFIC and MDFI. In terms of domain architecture, Cyclin N-terminal spans 12–147 (FFTREQLENT…IMLQTLGFEI (136 aa)). Positions 250–298 (RLKRIRNWRAMAKKPKVDGQVSETPLLGSSLVQNSILVDSVTGVPANPS) are interaction with POLR2A. Polar residues-rich tracts occupy residues 297-307 (PSFQKPSTSTF) and 314-325 (NSGSTSVQDSRA). Disordered stretches follow at residues 297–325 (PSFQKPSTSTFPAPIPLNSGSTSVQDSRA), 340–364 (SYSLSSHQEWPQHPDSARTDPVYTQ), 385–428 (ALHS…GMLP), and 458–645 (AEQQ…SSVK). The span at 395-409 (DKVADHSSAKQEYTH) shows a compositional bias: basic and acidic residues. A Glycyl lysine isopeptide (Lys-Gly) (interchain with G-Cter in SUMO2) cross-link involves residue lysine 404. At serine 477 the chain carries Phosphoserine. 3 stretches are compositionally biased toward basic and acidic residues: residues 489 to 503 (DRPEKHVAEKKERSG), 517 to 543 (GPSKEELKMKIKVASSERHSSSDEGSG), and 552 to 565 (ISRDHKEKHKEHPA). Over residues 566-576 (NRHHSSHKYLH) the composition is skewed to basic residues. Serine 596 is subject to Phosphoserine. The segment covering 631-645 (SSKSAGSSSSSSSVK) has biased composition (low complexity).

Belongs to the cyclin family. Cyclin C subfamily. Interacts with CDK9 to form P-TEFb. Interacts with POLR2A (via the C-terminal domain (CTD)); mediates transcriptional activity. Interacts with HEXIM1; mediates formation of a tripartite complex with KPNA2. Interacts with HEXIM2. Interacts with PKN1; enhances MYOD1-dependent transcription. P-TEFB complex interacts with RB1; promotes phosphorylation of RB1. P-TEFB complex interacts with MYOD1; promotes the transcriptional activity of MYOD1 through its CDK9-mediated phosphorylation. Interacts with MDFI and MDFIC. As to expression, highly expressed in all phases of skeletal muscle differentiation, particularly in later stages. Highly expressed in skeletal muscle. Significantly expressed in heart, brain, kidney, liver, testis, and pancreas.

Its subcellular location is the cytoplasm. It is found in the perinuclear region. It localises to the nucleus. Its function is as follows. Regulatory subunit of the cyclin-dependent kinase pair (CDK9/cyclin T) complex, also called positive transcription elongation factor B (P-TEFB), which is proposed to facilitate the transition from abortive to production elongation by phosphorylating the CTD (carboxy-terminal domain) of the large subunit of RNA polymerase II (RNAP II). The activity of this complex is regulated by binding with 7SK snRNA. Plays a role during muscle differentiation; P-TEFB complex interacts with MYOD1; this tripartite complex promotes the transcriptional activity of MYOD1 through its CDK9-mediated phosphorylation and binds the chromatin of promoters and enhancers of muscle-specific genes; this event correlates with hyperphosphorylation of the CTD domain of RNA pol II. In addition, enhances MYOD1-dependent transcription through interaction with PKN1. Involved in early embryo development. The protein is Cyclin-T2 of Mus musculus (Mouse).